A 268-amino-acid polypeptide reads, in one-letter code: Lipase (268 aa).

The N-terminal stretch at 1–34 (MRLSRRAATASALLLTPALALFGASAAVSAPRIQ) is a signal peptide. The Nucleophile role is filled by Ser-44. Disulfide bonds link Cys-61-Cys-86, Cys-127-Cys-135, and Cys-185-Cys-232. The active site involves His-250.

As to quaternary structure, monomer.

It is found in the secreted. It carries out the reaction a triacylglycerol + H2O = a diacylglycerol + a fatty acid + H(+). The enzyme catalyses hexadecanoyl-CoA + H2O = hexadecanoate + CoA + H(+). Its activity is regulated as follows. Inhibited by 3,4-dichloroisocoumarin and tetrahydrolipstatin in the absence of substrate, but by phenylmethylsulfonyl fluoride (PMSF) only in the presence of substrate. Several water-miscible solvents enhance the lipase hydrolytic activity in vitro. Tetrahydrofuran and N,N-dimethylformamide (both 50%) inactivate the enzyme with t1/2 of 5 minutes and t1/2 of 2 hours, respectively. Its function is as follows. Catalyzes the hydrolysis of p-nitrophenyl esters, alpha- and beta-naphthyl esters, and triacylglycerols, with a preference for medium acyl chain length (C8-C12). Shows a much higher hydrolysis rate of glycerol esters of unsaturated C16 and C18 fatty acids than that of their saturated counterparts, and a preference for cis double bond. Is also able to hydrolyze several natural oils and Tween detergents. Also displays thioesterase and phospholipase activities, towards palmitoyl-coenzyme A and diheptanoyl glycerophosphocholine, respectively. Shows transesterification activity of racemic 1-phenyl ethanol with vinyl acetate in hexane, proceeding with partial (R)-enantioselectivity. The chain is Lipase from Streptomyces rimosus.